Here is a 65-residue protein sequence, read N- to C-terminus: Large ribosomal subunit protein uL29 (65 aa).

This sequence belongs to the universal ribosomal protein uL29 family.

This chain is Large ribosomal subunit protein uL29, found in Lactobacillus johnsonii (strain CNCM I-12250 / La1 / NCC 533).